The primary structure comprises 103 residues: Methane monooxygenase component D (103 aa).

In terms of assembly, the soluble methane monooxygenase (sMMO) consists of four components A/MMOH (composed of alpha/MmoX, beta/MmoY and gamma/MmoZ), B/MMOB (MmoB), C/MMOR (MmoC) and D/MMOD (MmoD).

The sequence is that of Methane monooxygenase component D (mmoD) from Methylococcus capsulatus (strain ATCC 33009 / NCIMB 11132 / Bath).